A 206-amino-acid chain; its full sequence is 2,3-bisphosphoglycerate-dependent phosphoglycerate mutase (206 aa).

Substrate is bound by residues 9–16 (RHGQSEWN), 22–23 (TG), Arg61, 88–91 (ERDY), Lys99, 115–116 (RR), and 159–160 (GN). His10 (tele-phosphohistidine intermediate) is an active-site residue. Glu88 (proton donor/acceptor) is an active-site residue.

This sequence belongs to the phosphoglycerate mutase family. BPG-dependent PGAM subfamily. Homodimer.

It carries out the reaction (2R)-2-phosphoglycerate = (2R)-3-phosphoglycerate. It functions in the pathway carbohydrate degradation; glycolysis; pyruvate from D-glyceraldehyde 3-phosphate: step 3/5. Its function is as follows. Catalyzes the interconversion of 2-phosphoglycerate and 3-phosphoglycerate. In Mesorhizobium japonicum (strain LMG 29417 / CECT 9101 / MAFF 303099) (Mesorhizobium loti (strain MAFF 303099)), this protein is 2,3-bisphosphoglycerate-dependent phosphoglycerate mutase.